Here is a 194-residue protein sequence, read N- to C-terminus: Imidazole glycerol phosphate synthase subunit HisH (194 aa).

In terms of domain architecture, Glutamine amidotransferase type-1 spans 3–194 (RIAIVDLGIG…LILLRNFRRL (192 aa)). The active-site Nucleophile is cysteine 74. Active-site residues include histidine 176 and glutamate 178.

In terms of assembly, heterodimer of HisH and HisF.

The protein resides in the cytoplasm. The enzyme catalyses 5-[(5-phospho-1-deoxy-D-ribulos-1-ylimino)methylamino]-1-(5-phospho-beta-D-ribosyl)imidazole-4-carboxamide + L-glutamine = D-erythro-1-(imidazol-4-yl)glycerol 3-phosphate + 5-amino-1-(5-phospho-beta-D-ribosyl)imidazole-4-carboxamide + L-glutamate + H(+). It catalyses the reaction L-glutamine + H2O = L-glutamate + NH4(+). The protein operates within amino-acid biosynthesis; L-histidine biosynthesis; L-histidine from 5-phospho-alpha-D-ribose 1-diphosphate: step 5/9. IGPS catalyzes the conversion of PRFAR and glutamine to IGP, AICAR and glutamate. The HisH subunit catalyzes the hydrolysis of glutamine to glutamate and ammonia as part of the synthesis of IGP and AICAR. The resulting ammonia molecule is channeled to the active site of HisF. In Pyrococcus furiosus (strain ATCC 43587 / DSM 3638 / JCM 8422 / Vc1), this protein is Imidazole glycerol phosphate synthase subunit HisH.